Consider the following 131-residue polypeptide: Small ribosomal subunit protein uS9c (131 aa).

The protein belongs to the universal ribosomal protein uS9 family.

The protein resides in the plastid. It localises to the chloroplast. The protein is Small ribosomal subunit protein uS9c (rps9) of Emiliania huxleyi (Coccolithophore).